The sequence spans 61 residues: Defensin-like peptide TXKs2 (61 aa).

The first 19 residues, 1-19 (MTYAILIIVSLLLISDRIS), serve as a signal peptide directing secretion. The propeptide occupies 20–22 (NVV). 3 disulfide bridges follow: cysteine 26–cysteine 47, cysteine 33–cysteine 56, and cysteine 37–cysteine 58.

This sequence belongs to the invertebrate defensin family. Expressed by the venom gland.

The protein localises to the secreted. Antibacterial protein. This Olivierus martensii (Manchurian scorpion) protein is Defensin-like peptide TXKs2.